The primary structure comprises 525 residues: Zinc finger protein 678 (525 aa).

14 C2H2-type zinc fingers span residues Phe-97–His-119, Tyr-125–His-147, Tyr-153–His-175, Tyr-181–His-203, Tyr-209–His-231, Tyr-237–His-259, Tyr-265–His-287, Tyr-293–His-315, Tyr-321–His-343, Tyr-349–His-371, Tyr-377–His-399, Tyr-405–His-427, Tyr-433–His-455, and Tyr-461–His-483. Residues Tyr-489–Tyr-511 form a C2H2-type 15; degenerate zinc finger.

The protein belongs to the krueppel C2H2-type zinc-finger protein family.

It is found in the nucleus. May be involved in transcriptional regulation. This Homo sapiens (Human) protein is Zinc finger protein 678 (ZNF678).